Reading from the N-terminus, the 870-residue chain is DNA mismatch repair protein MutS (870 aa).

616–623 (GPNMAGKS) provides a ligand contact to ATP.

Belongs to the DNA mismatch repair MutS family.

Functionally, this protein is involved in the repair of mismatches in DNA. It is possible that it carries out the mismatch recognition step. This protein has a weak ATPase activity. This chain is DNA mismatch repair protein MutS, found in Parabacteroides distasonis (strain ATCC 8503 / DSM 20701 / CIP 104284 / JCM 5825 / NCTC 11152).